Consider the following 162-residue polypeptide: Terminase, small subunit (162 aa).

The segment at 7-27 (NRFWEARSSHGRNPKFESPEA) is helix-turn-helix (HTH). The tract at residues 132–162 (QVEDVTPDKGDRDKRRSRIKELFNRGTGRDS) is disordered. Over residues 137-162 (TPDKGDRDKRRSRIKELFNRGTGRDS) the composition is skewed to basic and acidic residues. An interaction with the terminase large subunit gp2 region spans residues 140–162 (KGDRDKRRSRIKELFNRGTGRDS). The DNA-binding element occupies 143–152 (RDKRRSRIKE).

Belongs to the P22likvirus small terminase family. Homononamer; forms a ring-like structure through which genomic DNA is translocated into the capsid. Interacts with the terminase small subunit; the active complex is composed of dimer of terminase large subunits and a nonamer ring of terminase small subunits.

The terminase small subunit binds to the packaging initiation site and regulates the ATPase activity of the terminase large subunit. The terminase lies at a unique vertex of the procapsid and is composed of two subunits, a small terminase subunit involved in viral DNA recognition (packaging 'pac' sequence), and a large terminase subunit possessing endonucleolytic and ATPase activities. Both terminase subunits heterooligomerize and are docked on the portal protein to form the packaging machine. The terminase large subunit exhibits endonuclease activity and cleaves the viral genome concatemer once the capsid is full (headful packaging). Once the capsid is packaged with the DNA, the terminase complex is substituted by neck proteins. The chain is Terminase, small subunit (3) from Salmonella typhimurium (Bacteriophage P22).